We begin with the raw amino-acid sequence, 132 residues long: Agouti-signaling protein (132 aa).

The first 22 residues, 1-22 (MDVTRLLLATLLVFLCFFTAYS), serve as a signal peptide directing secretion. The N-linked (GlcNAc...) asparagine glycan is linked to asparagine 39. Residues 61-79 (EISRKEAEKKRSSKKEASM) show a composition bias toward basic and acidic residues. The interval 61–87 (EISRKEAEKKRSSKKEASMKKVARPRT) is disordered. Cystine bridges form between cysteine 93-cysteine 108, cysteine 100-cysteine 114, cysteine 107-cysteine 125, cysteine 111-cysteine 132, and cysteine 116-cysteine 123. The region spanning 93–132 (CVATRDSCKPPAPACCDPCASCQCRFFRSACSCRVLSLNC) is the Agouti domain.

The protein localises to the secreted. Its function is as follows. Involved in the regulation of melanogenesis. The binding of ASP to MC1R precludes alpha-MSH initiated signaling and thus blocks production of cAMP, leading to a down-regulation of eumelanogenesis (brown/black pigment) and thus increasing synthesis of pheomelanin (yellow/red pigment). The protein is Agouti-signaling protein (ASIP) of Macaca fascicularis (Crab-eating macaque).